The following is a 513-amino-acid chain: Light-independent protochlorophyllide reductase subunit B (513 aa).

Aspartate 36 contributes to the [4Fe-4S] cluster binding site. Aspartate 299 serves as the catalytic Proton donor. 434–435 (GM) provides a ligand contact to substrate.

Belongs to the ChlB/BchB/BchZ family. Protochlorophyllide reductase is composed of three subunits; ChlL, ChlN and ChlB. Forms a heterotetramer of two ChlB and two ChlN subunits. The cofactor is [4Fe-4S] cluster.

It is found in the plastid. The protein localises to the chloroplast. The enzyme catalyses chlorophyllide a + oxidized 2[4Fe-4S]-[ferredoxin] + 2 ADP + 2 phosphate = protochlorophyllide a + reduced 2[4Fe-4S]-[ferredoxin] + 2 ATP + 2 H2O. Its pathway is porphyrin-containing compound metabolism; chlorophyll biosynthesis (light-independent). Its function is as follows. Component of the dark-operative protochlorophyllide reductase (DPOR) that uses Mg-ATP and reduced ferredoxin to reduce ring D of protochlorophyllide (Pchlide) to form chlorophyllide a (Chlide). This reaction is light-independent. The NB-protein (ChlN-ChlB) is the catalytic component of the complex. The protein is Light-independent protochlorophyllide reductase subunit B of Anthoceros angustus (Hornwort).